Here is a 218-residue protein sequence, read N- to C-terminus: Eukaryotic translation initiation factor 3 subunit K (218 aa).

Ala-2 is modified (N-acetylalanine). At Thr-28 the chain carries Phosphothreonine. The PCI domain maps to 42–204 (YDLEANLAVL…SIKPKNIVEK (163 aa)). A Phosphoserine modification is found at Ser-217.

Belongs to the eIF-3 subunit K family. Component of the eukaryotic translation initiation factor 3 (eIF-3) complex, which is composed of 13 subunits: EIF3A, EIF3B, EIF3C, EIF3D, EIF3E, EIF3F, EIF3G, EIF3H, EIF3I, EIF3J, EIF3K, EIF3L and EIF3M. The eIF-3 complex appears to include 3 stable modules: module A is composed of EIF3A, EIF3B, EIF3G and EIF3I; module B is composed of EIF3F, EIF3H, and EIF3M; and module C is composed of EIF3C, EIF3D, EIF3E, EIF3K and EIF3L. EIF3C of module C binds EIF3B of module A and EIF3H of module B, thereby linking the three modules. EIF3J is a labile subunit that binds to the eIF-3 complex via EIF3B. The eIF-3 complex interacts with RPS6KB1 under conditions of nutrient depletion. Mitogenic stimulation leads to binding and activation of a complex composed of MTOR and RPTOR, leading to phosphorylation and release of RPS6KB1 and binding of EIF4B to eIF-3. Identified in a HCV IRES-mediated translation complex, at least composed of EIF3C, IGF2BP1, RPS3 and HCV RNA-replicon. Interacts with ALKBH4, IFIT1 and IFIT2.

The protein localises to the nucleus. The protein resides in the cytoplasm. Component of the eukaryotic translation initiation factor 3 (eIF-3) complex, which is required for several steps in the initiation of protein synthesis. The eIF-3 complex associates with the 40S ribosome and facilitates the recruitment of eIF-1, eIF-1A, eIF-2:GTP:methionyl-tRNAi and eIF-5 to form the 43S pre-initiation complex (43S PIC). The eIF-3 complex stimulates mRNA recruitment to the 43S PIC and scanning of the mRNA for AUG recognition. The eIF-3 complex is also required for disassembly and recycling of post-termination ribosomal complexes and subsequently prevents premature joining of the 40S and 60S ribosomal subunits prior to initiation. The eIF-3 complex specifically targets and initiates translation of a subset of mRNAs involved in cell proliferation, including cell cycling, differentiation and apoptosis, and uses different modes of RNA stem-loop binding to exert either translational activation or repression. The protein is Eukaryotic translation initiation factor 3 subunit K (Eif3k) of Mus musculus (Mouse).